Here is a 180-residue protein sequence, read N- to C-terminus: MRILGIDPGLRVTGFGVIDQSGHTLSYVASGVIKTADADLPSRLGTIFEGISTLIRQHSPDQSAIEKVFVNVNPQSTLLLGQARGAAICGLVASGVPVAEYTALQLKQAVVGYGRATKEQMQQMVVRLLNLSGVPGTDAADALGMAICHAHGGTTLSTLGGIAPSLAKKGLRVRRGRLVG.

Residues aspartate 7, glutamate 66, and aspartate 138 contribute to the active site. Mg(2+)-binding residues include aspartate 7, glutamate 66, and aspartate 138.

This sequence belongs to the RuvC family. As to quaternary structure, homodimer which binds Holliday junction (HJ) DNA. The HJ becomes 2-fold symmetrical on binding to RuvC with unstacked arms; it has a different conformation from HJ DNA in complex with RuvA. In the full resolvosome a probable DNA-RuvA(4)-RuvB(12)-RuvC(2) complex forms which resolves the HJ. The cofactor is Mg(2+).

The protein localises to the cytoplasm. It catalyses the reaction Endonucleolytic cleavage at a junction such as a reciprocal single-stranded crossover between two homologous DNA duplexes (Holliday junction).. Functionally, the RuvA-RuvB-RuvC complex processes Holliday junction (HJ) DNA during genetic recombination and DNA repair. Endonuclease that resolves HJ intermediates. Cleaves cruciform DNA by making single-stranded nicks across the HJ at symmetrical positions within the homologous arms, yielding a 5'-phosphate and a 3'-hydroxyl group; requires a central core of homology in the junction. The consensus cleavage sequence is 5'-(A/T)TT(C/G)-3'. Cleavage occurs on the 3'-side of the TT dinucleotide at the point of strand exchange. HJ branch migration catalyzed by RuvA-RuvB allows RuvC to scan DNA until it finds its consensus sequence, where it cleaves and resolves the cruciform DNA. In Paraburkholderia phytofirmans (strain DSM 17436 / LMG 22146 / PsJN) (Burkholderia phytofirmans), this protein is Crossover junction endodeoxyribonuclease RuvC.